The chain runs to 67 residues: Protein AaeX (67 aa).

Transmembrane regions (helical) follow at residues 3–23 (VLPV…EIIV) and 43–63 (LVWH…YVVS).

The protein belongs to the AaeX family.

The protein localises to the cell membrane. This chain is Protein AaeX, found in Erwinia tasmaniensis (strain DSM 17950 / CFBP 7177 / CIP 109463 / NCPPB 4357 / Et1/99).